A 617-amino-acid chain; its full sequence is Elongation factor 4 (617 aa).

Residues 17–198 (AIIRNFCIIA…KIVRDLPAPV (182 aa)) form the tr-type G domain. GTP contacts are provided by residues 29-34 (DHGKST) and 145-148 (NKID).

Belongs to the TRAFAC class translation factor GTPase superfamily. Classic translation factor GTPase family. LepA subfamily.

Its subcellular location is the cell membrane. The catalysed reaction is GTP + H2O = GDP + phosphate + H(+). Functionally, required for accurate and efficient protein synthesis under certain stress conditions. May act as a fidelity factor of the translation reaction, by catalyzing a one-codon backward translocation of tRNAs on improperly translocated ribosomes. Back-translocation proceeds from a post-translocation (POST) complex to a pre-translocation (PRE) complex, thus giving elongation factor G a second chance to translocate the tRNAs correctly. Binds to ribosomes in a GTP-dependent manner. The chain is Elongation factor 4 from Arthrobacter sp. (strain FB24).